A 184-amino-acid polypeptide reads, in one-letter code: Putative manganese efflux pump MntP (184 aa).

The next 5 membrane-spanning stretches (helical) occupy residues 39–59 (IFGVFQALMPFLGYILGLSFV), 65–85 (IDHFIAFGILGFLGAKMILEA), 102–122 (LALGAVATSIDALAVGITFSF), 132–152 (LIIGTVCFVLCTAACYVGKIL), and 161–181 (LVLGGLILIGLGTKILITHLV).

This sequence belongs to the MntP (TC 9.B.29) family.

It is found in the cell inner membrane. Functionally, probably functions as a manganese efflux pump. This is Putative manganese efflux pump MntP from Campylobacter curvus (strain 525.92).